The sequence spans 159 residues: Probable E3 ubiquitin-protein ligase RHA1A (159 aa).

Residues 86 to 130 (CTVCLSDFESDDKVRQLPKCGHVFHHYCLDRWIVDYNKMKCPVCR) form an RING-type; atypical zinc finger.

As to expression, predominantly expressed in stems.

The catalysed reaction is S-ubiquitinyl-[E2 ubiquitin-conjugating enzyme]-L-cysteine + [acceptor protein]-L-lysine = [E2 ubiquitin-conjugating enzyme]-L-cysteine + N(6)-ubiquitinyl-[acceptor protein]-L-lysine.. It functions in the pathway protein modification; protein ubiquitination. Its function is as follows. Probable E3 ubiquitin-protein ligase that may possess E3 ubiquitin ligase activity in vitro. In Arabidopsis thaliana (Mouse-ear cress), this protein is Probable E3 ubiquitin-protein ligase RHA1A.